A 934-amino-acid polypeptide reads, in one-letter code: Replication factor C subunit 1 (934 aa).

Residues 1–190 (MSNSDIRSFF…RSSKSKGLPR (190 aa)) form a disordered region. Serine 27 is modified (phosphoserine). Residues 29-39 (KPKRSLKKKRI) show a composition bias toward basic residues. A compositionally biased stretch (polar residues) spans 89–104 (GVSTTPDEYFEQQSTR). Positions 118 to 128 (TTSKDVVHPVK) are enriched in basic and acidic residues. Over residues 165-186 (TSKSKSHTTTATTHTSRSSKSK) the composition is skewed to low complexity. The 91-residue stretch at 236–326 (GNSDCLSGIS…PASGGTGAAA (91 aa)) folds into the BRCT domain. ATP-binding positions include threonine 362, cysteine 374, 416–423 (GPPGIGKT), and asparagine 519. Positions 876 to 895 (AEDEMLEEASDSEAANEEDI) are enriched in acidic residues. Residues 876-934 (AEDEMLEEASDSEAANEEDIDLSKDKFISVPKKPKKRTKAKAEASSSSSTSRRSRKKTA) form a disordered region.

This sequence belongs to the activator 1 large subunit family. As to quaternary structure, heteropentamer of subunits rfc1, rfc2, rfc3, rfc4 and rfc5 that forms a complex (RFC) with PCNA in the presence of ATP. Interacts with cdc24.

The protein resides in the nucleus. Its subcellular location is the nucleolus. Functionally, the elongation of primed DNA templates by DNA polymerase delta and epsilon requires the action of the accessory proteins PCNA and activator 1. Subunit 1 is essential for cell cycle progression. It may associate with components of the DNA replication machinery and serve to enhance the efficiency of DNA replication. This is Replication factor C subunit 1 (rfc1) from Schizosaccharomyces pombe (strain 972 / ATCC 24843) (Fission yeast).